The primary structure comprises 536 residues: CTP synthase (536 aa).

The amidoligase domain stretch occupies residues 1 to 268; the sequence is MSTKYVFVTG…DNLVCEKLHL (268 aa). CTP is bound at residue Ser14. Ser14 serves as a coordination point for UTP. 15-20 lines the ATP pocket; that stretch reads ALGKGI. Tyr55 provides a ligand contact to L-glutamine. An ATP-binding site is contributed by Asp72. Asp72 and Glu142 together coordinate Mg(2+). CTP is bound by residues 149–151, 189–194, and Lys225; these read DIE and KTKPTQ. UTP is bound by residues 189–194 and Lys225; that span reads KTKPTQ. Residues 293-535 form the Glutamine amidotransferase type-1 domain; sequence KIALVGKYVE…IKAALEENKS (243 aa). Gly355 is a binding site for L-glutamine. Catalysis depends on Cys382, which acts as the Nucleophile; for glutamine hydrolysis. Residues 383 to 386, Glu406, and Arg463 each bind L-glutamine; that span reads LGMQ. Residues His508 and Glu510 contribute to the active site.

Belongs to the CTP synthase family. In terms of assembly, homotetramer.

The enzyme catalyses UTP + L-glutamine + ATP + H2O = CTP + L-glutamate + ADP + phosphate + 2 H(+). The catalysed reaction is L-glutamine + H2O = L-glutamate + NH4(+). It catalyses the reaction UTP + NH4(+) + ATP = CTP + ADP + phosphate + 2 H(+). It participates in pyrimidine metabolism; CTP biosynthesis via de novo pathway; CTP from UDP: step 2/2. Its activity is regulated as follows. Allosterically activated by GTP, when glutamine is the substrate; GTP has no effect on the reaction when ammonia is the substrate. The allosteric effector GTP functions by stabilizing the protein conformation that binds the tetrahedral intermediate(s) formed during glutamine hydrolysis. Inhibited by the product CTP, via allosteric rather than competitive inhibition. Its function is as follows. Catalyzes the ATP-dependent amination of UTP to CTP with either L-glutamine or ammonia as the source of nitrogen. Regulates intracellular CTP levels through interactions with the four ribonucleotide triphosphates. The sequence is that of CTP synthase from Clostridium beijerinckii (strain ATCC 51743 / NCIMB 8052) (Clostridium acetobutylicum).